We begin with the raw amino-acid sequence, 404 residues long: Phosphopentomutase (404 aa).

The Mn(2+) site is built by aspartate 10, aspartate 303, histidine 308, aspartate 344, histidine 345, and histidine 356.

The protein belongs to the phosphopentomutase family. It depends on Mn(2+) as a cofactor.

Its subcellular location is the cytoplasm. The catalysed reaction is 2-deoxy-alpha-D-ribose 1-phosphate = 2-deoxy-D-ribose 5-phosphate. The enzyme catalyses alpha-D-ribose 1-phosphate = D-ribose 5-phosphate. Its pathway is carbohydrate degradation; 2-deoxy-D-ribose 1-phosphate degradation; D-glyceraldehyde 3-phosphate and acetaldehyde from 2-deoxy-alpha-D-ribose 1-phosphate: step 1/2. In terms of biological role, isomerase that catalyzes the conversion of deoxy-ribose 1-phosphate (dRib-1-P) and ribose 1-phosphate (Rib-1-P) to deoxy-ribose 5-phosphate (dRib-5-P) and ribose 5-phosphate (Rib-5-P), respectively. This is Phosphopentomutase from Shewanella putrefaciens (strain CN-32 / ATCC BAA-453).